Here is an 87-residue protein sequence, read N- to C-terminus: Phosphocarrier protein HPr (87 aa).

The region spanning methionine 1–glutamate 87 is the HPr domain. The active-site Pros-phosphohistidine intermediate is histidine 15. Serine 46 bears the Phosphoserine; by HPrK/P mark.

The protein belongs to the HPr family.

It is found in the cytoplasm. With respect to regulation, phosphorylation on Ser-46 inhibits the phosphoryl transfer from enzyme I to HPr. Its function is as follows. General (non sugar-specific) component of the phosphoenolpyruvate-dependent sugar phosphotransferase system (sugar PTS). This major carbohydrate active-transport system catalyzes the phosphorylation of incoming sugar substrates concomitantly with their translocation across the cell membrane. The phosphoryl group from phosphoenolpyruvate (PEP) is transferred to the phosphoryl carrier protein HPr by enzyme I. Phospho-HPr then transfers it to the PTS EIIA domain. P-Ser-HPr interacts with the catabolite control protein A (CcpA), forming a complex that binds to DNA at the catabolite response elements cre, operator sites preceding a large number of catabolite-regulated genes. Thus, P-Ser-HPr is a corepressor in carbon catabolite repression (CCR), a mechanism that allows bacteria to coordinate and optimize the utilization of available carbon sources. P-Ser-HPr also plays a role in inducer exclusion, in which it probably interacts with several non-PTS permeases and inhibits their transport activity. This is Phosphocarrier protein HPr (ptsH) from Halalkalibacterium halodurans (strain ATCC BAA-125 / DSM 18197 / FERM 7344 / JCM 9153 / C-125) (Bacillus halodurans).